A 453-amino-acid chain; its full sequence is Ferruginol synthase (453 aa).

A helical membrane pass occupies residues 15–35; sequence LSKKYGPLMSIHLGSLYTVIV. Residue cysteine 397 participates in heme binding.

Belongs to the cytochrome P450 family. Requires heme as cofactor. Expressed in leaf glandular trichomes.

The protein resides in the membrane. It carries out the reaction abieta-8,11,13-triene + reduced [NADPH--hemoprotein reductase] + O2 = ferruginol + oxidized [NADPH--hemoprotein reductase] + H2O + H(+). The catalysed reaction is ferruginol + reduced [NADPH--hemoprotein reductase] + O2 = 11-hydroxyferruginol + oxidized [NADPH--hemoprotein reductase] + H2O + H(+). The enzyme catalyses miltiradiene + 2 reduced [NADPH--hemoprotein reductase] + 2 O2 = 11-oxomiltiradiene + 2 oxidized [NADPH--hemoprotein reductase] + 3 H2O + 2 H(+). It participates in secondary metabolite biosynthesis; terpenoid biosynthesis. Functionally, monooxygenase involved in the biosynthesis of labdane-related diterpenes natural products. Catalyzes the oxidation of abietatriene to produce ferruginol. Ferruginol is an intermediate in the biosynthesis of carnosate, a potent antioxidant. May also convert miltiradiene into 11-oxomiltiradiene. The chain is Ferruginol synthase from Salvia pomifera (Apple sage).